Reading from the N-terminus, the 105-residue chain is 3-phenylpropionate/cinnamic acid dioxygenase ferredoxin subunit (105 aa).

The 96-residue stretch at 4–99 (LFVCTVEELP…VVVKDGNIYI (96 aa)) folds into the Rieske domain. 4 residues coordinate [2Fe-2S] cluster: C42, H44, C62, and H65.

It belongs to the bacterial ring-hydroxylating dioxygenase ferredoxin component family. As to quaternary structure, this dioxygenase system consists of four proteins: the two subunits of the hydroxylase component (HcaE and HcaF), a ferredoxin (HcaC) and a ferredoxin reductase (HcaD). Requires [2Fe-2S] cluster as cofactor.

The protein operates within aromatic compound metabolism; 3-phenylpropanoate degradation. Functionally, part of the multicomponent 3-phenylpropionate dioxygenase, that converts 3-phenylpropionic acid (PP) and cinnamic acid (CI) into 3-phenylpropionate-dihydrodiol (PP-dihydrodiol) and cinnamic acid-dihydrodiol (CI-dihydrodiol), respectively. This protein seems to be a 2Fe-2S ferredoxin. This Photorhabdus laumondii subsp. laumondii (strain DSM 15139 / CIP 105565 / TT01) (Photorhabdus luminescens subsp. laumondii) protein is 3-phenylpropionate/cinnamic acid dioxygenase ferredoxin subunit.